Here is a 438-residue protein sequence, read N- to C-terminus: Coenzyme A disulfide reductase (438 aa).

8–33 (GAVAGGATCASQIRRLDKESDIIIFE) contributes to the FAD binding site. Residues Thr15, Gln19, Arg22, Ser39, and Asn42 each contribute to the substrate site. The Nucleophile role is filled by Cys43. The active-site Redox-active is Cys43. Lys71 is a binding site for substrate. 151–166 (VLVVGAGYVSLEVLEN) contributes to the NADP(+) binding site. 267–277 (TNVPNIYAIGD) contacts FAD. Substrate is bound at residue His299. Position 419 (Tyr419) interacts with FAD. Lys427 is a binding site for substrate.

The protein belongs to the class-III pyridine nucleotide-disulfide oxidoreductase family. Homodimer. It depends on FAD as a cofactor.

It catalyses the reaction NADP(+) + 2 CoA = CoA-disulfide + NADPH + H(+). In terms of biological role, catalyzes specifically the NADPH-dependent reduction of coenzyme A disulfide. The sequence is that of Coenzyme A disulfide reductase from Staphylococcus aureus (strain MSSA476).